The primary structure comprises 384 residues: ATP phosphoribosyltransferase regulatory subunit (384 aa).

Belongs to the class-II aminoacyl-tRNA synthetase family. HisZ subfamily. Heteromultimer composed of HisG and HisZ subunits.

Its subcellular location is the cytoplasm. It participates in amino-acid biosynthesis; L-histidine biosynthesis; L-histidine from 5-phospho-alpha-D-ribose 1-diphosphate: step 1/9. Its function is as follows. Required for the first step of histidine biosynthesis. May allow the feedback regulation of ATP phosphoribosyltransferase activity by histidine. The sequence is that of ATP phosphoribosyltransferase regulatory subunit from Paracidovorax citrulli (strain AAC00-1) (Acidovorax citrulli).